The chain runs to 155 residues: Protein SREK1IP1 (155 aa).

The CCHC-type zinc-finger motif lies at 13 to 30 (AGCKKCGYPGHLTFECRN). The interval 44-155 (VSSTSSEDSD…TPNSSEFSRK (112 aa)) is disordered. A Phosphoserine modification is found at Ser52. Basic and acidic residues predominate over residues 66-84 (QEKRINEEEEKKKEKSKEK). The span at 85–94 (IKLKKKRKRS) shows a compositional bias: basic residues. 2 positions are modified to phosphoserine: Ser96 and Ser97. Over residues 107–142 (QKKQKYQKKEKKKEKKSKSKKGKHHKKEKKKRKKEK) the composition is skewed to basic residues. Position 146 is a phosphothreonine (Thr146). Over residues 146-155 (TPNSSEFSRK) the composition is skewed to polar residues.

As to quaternary structure, interacts with SREK1/SFRS12.

Possible splicing regulator involved in the control of cellular survival. The sequence is that of Protein SREK1IP1 (SREK1IP1) from Homo sapiens (Human).